Consider the following 523-residue polypeptide: Non-specific phospholipase C3 (523 aa).

Residues 44 to 64 (DGVSESEPRSNPLSTSDPNSA) form a disordered region. Over residues 52-64 (RSNPLSTSDPNSA) the composition is skewed to polar residues.

Belongs to the bacterial phospholipase C family. As to expression, expressed in root tips, cotyledons, on leaf margins, stems, young anthers and funiculus.

It catalyses the reaction a 1-acyl-sn-glycero-3-phosphate + H2O = a 1-acyl-sn-glycerol + phosphate. Possesses specific phosphatase activity toward lysophosphatidic acid (LPA) in vitro. Does not show phospholipase C activity. May play a role in signal transduction and storage lipid synthesis. May be involved in brassinolide-mediated signaling in root development. The protein is Non-specific phospholipase C3 (NPC3) of Arabidopsis thaliana (Mouse-ear cress).